Reading from the N-terminus, the 337-residue chain is Phenylalanine--tRNA ligase alpha subunit (337 aa).

Glutamate 258 is a Mg(2+) binding site.

The protein belongs to the class-II aminoacyl-tRNA synthetase family. Phe-tRNA synthetase alpha subunit type 1 subfamily. Tetramer of two alpha and two beta subunits. Mg(2+) is required as a cofactor.

The protein resides in the cytoplasm. The enzyme catalyses tRNA(Phe) + L-phenylalanine + ATP = L-phenylalanyl-tRNA(Phe) + AMP + diphosphate + H(+). This Burkholderia thailandensis (strain ATCC 700388 / DSM 13276 / CCUG 48851 / CIP 106301 / E264) protein is Phenylalanine--tRNA ligase alpha subunit.